Reading from the N-terminus, the 281-residue chain is Endochitinase B (281 aa).

Residues 1–33 (MAMAKAGAPRVSAAQLVTLGLSLLCAVAGPAAA) form the signal peptide. The region spanning 34–68 (QNCGCQPNVCCSKFGYCGTTDEYCGDGCQSGPCRS) is the Chitin-binding type-1 domain. Intrachain disulfides connect Cys-36–Cys-44, Cys-38–Cys-50, Cys-43–Cys-57, and Cys-61–Cys-66. The tract at residues 69 to 78 (GGGGSSGGGG) is hinge region (Gly-rich). Residues 79–281 (ANVASVVTGS…GVDPGPNLTC (203 aa)) are catalytic. Cys-101 and Cys-150 are joined by a disulfide. Glu-145 serves as the catalytic Proton donor. An N-linked (GlcNAc...) asparagine glycan is attached at Asn-156. Disulfide bonds link Cys-162-Cys-171 and Cys-249-Cys-281. N-linked (GlcNAc...) asparagine glycosylation occurs at Asn-278.

It belongs to the glycosyl hydrolase 19 family. Chitinase class I subfamily.

It localises to the secreted. It carries out the reaction Random endo-hydrolysis of N-acetyl-beta-D-glucosaminide (1-&gt;4)-beta-linkages in chitin and chitodextrins.. Its function is as follows. Defense against chitin-containing fungal pathogens. Its action is countered by fungal polyglycine hydrolases, that cleaves within its hinge region (Gly-rich) to disrupt chitin-binding. The polypeptide is Endochitinase B (Zea mays (Maize)).